The primary structure comprises 362 residues: MKESLRLRLDQMVDRYEEVTALLSDPSVINDNNKFRELSVEHSDLMDITTLWQNYVGAETDQADAEAMLKEASDPDMKEMMQEEIDSARDTIVEMEEALNVMMLPKDPNDKVPAFLEIRAGTGGDEAAIFSGDLFRMYQKYAQAQGWTLEVLSANEGEHGGYKEIITRVSGNSVYGRLKFESGVHRVQRVPDTESQGRVHTSACTVAVMPEVEIDDTVNLNPADIRFDTFRSSGAGGQHVNTTDSAVRLTHIPTGTVVECQQERSQHKNRAQAMKMLISKIQQVKVQAQVDAADTIRRDLVGSGDRSERIRTYNFPQGRMTDHRINLTLYKLDSIMEGDLDEILDALLREHQADLMASVGGA.

The residue at position 238 (glutamine 238) is an N5-methylglutamine.

The protein belongs to the prokaryotic/mitochondrial release factor family. Methylated by PrmC. Methylation increases the termination efficiency of RF1.

It is found in the cytoplasm. Its function is as follows. Peptide chain release factor 1 directs the termination of translation in response to the peptide chain termination codons UAG and UAA. The protein is Peptide chain release factor 1 of Psychrobacter arcticus (strain DSM 17307 / VKM B-2377 / 273-4).